The chain runs to 148 residues: Hemoglobin subunit beta (148 aa).

A Globin domain is found at 3–148 (DWTDAERSAI…VVSALGRQYH (146 aa)). 2 residues coordinate heme b: H64 and H93.

The protein belongs to the globin family. Heterotetramer of two alpha chains and two beta chains. As to expression, red blood cells.

In terms of biological role, involved in oxygen transport from gills to the various peripheral tissues. In Salmo salar (Atlantic salmon), this protein is Hemoglobin subunit beta (hbb).